We begin with the raw amino-acid sequence, 454 residues long: MTLPLHVVILAAGEGKRMRSSLPKVLQPLAGQPMLAHVIATARQLQPAAIHIVYGHGGDQVQAAFADQGDLQWAEQCEQLGTGHAVQQAMPAIPDAATVLVLYGDVPLIRSESLLQLLHAPGRMAVLVAELANPTGYGRILRDAEGKVAAIVEQKDANDEQRRIRTINTGILTAESTALRRWLAGLSKDNAQGEFYLTDVFASAAADFTPADMVHVADPQHVEGANDPWQLAQLERAWQLRAARTLCLQGVRMADPARVEQRGSVQVGRDVQLDIDVILEGNVTLGDDVVIGPFVRLRDVTLGAGTHVRAHSDLEGVVTEGAVQIGPFARLRPGTVLADGVHIGNFVETKKVTMGVGSKANHLTYLGDAVIGSKVNIGAGTITCNYDGVNKSQTTIGDGAFVGSNSALVAPIEIGANSTIGAGSVITSDAPAGQLSVTRARQTVIEGWKRPTKK.

A pyrophosphorylase region spans residues 1–228; that stretch reads MTLPLHVVIL…PQHVEGANDP (228 aa). Residues 10–13, lysine 24, glutamine 76, 81–82, 103–105, glycine 138, glutamate 153, asparagine 168, and asparagine 226 each bind UDP-N-acetyl-alpha-D-glucosamine; these read LAAG, GT, and YGD. Aspartate 105 contacts Mg(2+). Asparagine 226 is a binding site for Mg(2+). The interval 229-249 is linker; that stretch reads WQLAQLERAWQLRAARTLCLQ. Positions 250–454 are N-acetyltransferase; it reads GVRMADPARV…IEGWKRPTKK (205 aa). Residues arginine 332 and lysine 350 each contribute to the UDP-N-acetyl-alpha-D-glucosamine site. Histidine 362 acts as the Proton acceptor in catalysis. UDP-N-acetyl-alpha-D-glucosamine-binding residues include tyrosine 365 and asparagine 376. Acetyl-CoA-binding positions include alanine 379, 385 to 386, serine 404, alanine 422, and arginine 439; that span reads NY.

This sequence in the N-terminal section; belongs to the N-acetylglucosamine-1-phosphate uridyltransferase family. It in the C-terminal section; belongs to the transferase hexapeptide repeat family. As to quaternary structure, homotrimer. It depends on Mg(2+) as a cofactor.

Its subcellular location is the cytoplasm. It carries out the reaction alpha-D-glucosamine 1-phosphate + acetyl-CoA = N-acetyl-alpha-D-glucosamine 1-phosphate + CoA + H(+). It catalyses the reaction N-acetyl-alpha-D-glucosamine 1-phosphate + UTP + H(+) = UDP-N-acetyl-alpha-D-glucosamine + diphosphate. Its pathway is nucleotide-sugar biosynthesis; UDP-N-acetyl-alpha-D-glucosamine biosynthesis; N-acetyl-alpha-D-glucosamine 1-phosphate from alpha-D-glucosamine 6-phosphate (route II): step 2/2. It functions in the pathway nucleotide-sugar biosynthesis; UDP-N-acetyl-alpha-D-glucosamine biosynthesis; UDP-N-acetyl-alpha-D-glucosamine from N-acetyl-alpha-D-glucosamine 1-phosphate: step 1/1. It participates in bacterial outer membrane biogenesis; LPS lipid A biosynthesis. Its function is as follows. Catalyzes the last two sequential reactions in the de novo biosynthetic pathway for UDP-N-acetylglucosamine (UDP-GlcNAc). The C-terminal domain catalyzes the transfer of acetyl group from acetyl coenzyme A to glucosamine-1-phosphate (GlcN-1-P) to produce N-acetylglucosamine-1-phosphate (GlcNAc-1-P), which is converted into UDP-GlcNAc by the transfer of uridine 5-monophosphate (from uridine 5-triphosphate), a reaction catalyzed by the N-terminal domain. This chain is Bifunctional protein GlmU, found in Xanthomonas euvesicatoria pv. vesicatoria (strain 85-10) (Xanthomonas campestris pv. vesicatoria).